A 790-amino-acid polypeptide reads, in one-letter code: Protein sel-1 homolog 1 (790 aa).

Residues 1–21 (MQVRVRLSLLLLCAVLLGSAA) form the signal peptide. Positions 22–51 (ATSDDKTNQDDSLDSKSSLPTDESVKDHTT) are disordered. Residues 22–734 (ATSDDKTNQD…LFTQLDMDQL (713 aa)) are Lumenal-facing. Positions 23–733 (TSDDKTNQDD…DLFTQLDMDQ (711 aa)) are interaction with ERLEC1, OS9 and SYVN1. Ser-64 carries the post-translational modification Phosphoserine. Residues 67–78 (AEVESLLQDEED) are compositionally biased toward acidic residues. The interval 67-98 (AEVESLLQDEEDSSKTQEEEISFLESPNPSSK) is disordered. One can recognise a Fibronectin type-II domain in the interval 118–166 (AHGEPCHFPFLFLDKEYDECTSDGREDGRLWCATTYDYKTDEKWGFCET). 2 cysteine pairs are disulfide-bonded: Cys-123–Cys-149 and Cys-137–Cys-164. Sel1-like repeat units lie at residues 179–214 (AEMIYQAGMKILNGSNRKSQKREAYRYLQKAAGMNH), 215–250 (TKALERVSYALLFGDYLTQNIQAAKEMFEKLTEEGS), 251–286 (PKGQTGLGFLYASGLGVNSSQAKALVYYTFGALGGN), 287–322 (LIAHMILGYRYWAGIGVLQSCESALTHYRLVANHVA), 369–405 (VQAQVGLGQLHLHGGRGVEQNHQRAFDYFNLAANAGN), 406–442 (SHAMAFLGKMYSEGSDIVPQSNETALHYFKKAADMGN), 443–478 (PVGQSGLGMAYLYGRGVQVNYDLALKYFQKAAEQGW), 479–514 (VDGQLQLGSMYYNGIGVKRDYKQALKYFNLASQGGH), and 515–550 (ILAFYNLAQMHASGTGVMRSCHTAVELFKNVCERGR). 2 N-linked (GlcNAc...) asparagine glycosylation sites follow: Asn-191 and Asn-213. Asn-268 carries an N-linked (GlcNAc...) asparagine glycan. The interval 348 to 533 (NSGMLEEDLI…MHASGTGVMR (186 aa)) is important for homodimerization and oligomerization. An N-linked (GlcNAc...) asparagine glycan is attached at Asn-427. Residue Asn-604 is glycosylated (N-linked (GlcNAc...) asparagine). Sel1-like repeat units follow at residues 623-658 (TVARIKLGDYHFYGFGTDVDYETAFIHYRLASEQQH) and 660-695 (AQAMFNLGYMHEKGLGIKQDIHLAKRFYDMAAEASP). An interaction with SYVN1 region spans residues 639-719 (TDVDYETAFI…VVYFLQYIRE (81 aa)). Positions 734-790 (LLGPEWDLYLMTIIALLLGTVIAYRQRQHQDIPVPRPPGPRPAPPQQEGPPEQQPPQ) are mediates retention in the endoplasmic reticulum. A helical transmembrane segment spans residues 735–755 (LGPEWDLYLMTIIALLLGTVI). Topologically, residues 756–790 (AYRQRQHQDIPVPRPPGPRPAPPQQEGPPEQQPPQ) are cytoplasmic. Residues 763 to 790 (QDIPVPRPPGPRPAPPQQEGPPEQQPPQ) form a disordered region. The segment covering 767–790 (VPRPPGPRPAPPQQEGPPEQQPPQ) has biased composition (pro residues).

Belongs to the sel-1 family. In terms of assembly, homodimer and homooligomer. May form a complex with ERLEC1, HSPA5, OS9, and SYVN1. Interacts with FOXRED2 and EDEM1. Interacts with LPL and LMF1; may stabilize the complex formed by LPL and LMF1 and thereby promote the export of LPL dimers. Component of the HRD1 complex, which comprises at least SYNV1/HRD1, DERL1/2, FAM8A1, HERPUD1/HERP, OS9, SEL1L and UBE2J1. SYNV1 assembles with SEL1L and FAM8A1 through its transmembrane domains, but interaction with its cytoplasmic domain is required to confer stability to FAM8A1 and enhance recruitment of HERPUD1. The interaction with SYNV1/HRD1 is direct. In terms of processing, N-glycosylated. As to expression, highly expressed in pancreas, white adipose tissue, liver and spleen (at protein level). Detected in heart, brain, spleen, lung, liver, kidney and testis.

It is found in the endoplasmic reticulum membrane. Plays a role in the endoplasmic reticulum quality control (ERQC) system also called ER-associated degradation (ERAD) involved in ubiquitin-dependent degradation of misfolded endoplasmic reticulum proteins. Enhances SYVN1 stability. Plays a role in LPL maturation and secretion. Required for normal differentiation of the pancreas epithelium, and for normal exocrine function and survival of pancreatic cells. May play a role in Notch signaling. In Mus musculus (Mouse), this protein is Protein sel-1 homolog 1 (Sel1l).